Reading from the N-terminus, the 1364-residue chain is Pleckstrin homology domain-containing family H member 1 (1364 aa).

A coiled-coil region spans residues 28-169 (FRLQASKIRE…VGSLQDALEA (142 aa)). Disordered regions lie at residues 184–266 (GAAE…SPPH), 296–321 (GTKT…PGTP), 356–395 (LHPS…ESPK), 487–529 (PFMD…IKRG), and 546–568 (DACS…SSYS). The span at 237–246 (EDSSSSTVHS) shows a compositional bias: polar residues. A compositionally biased stretch (basic and acidic residues) spans 364 to 379 (LESRARSREEPEKMEM). Positions 509–520 (VPSSESRKTSGL) are enriched in polar residues. PH domains lie at 578–672 (SLEK…SLLK) and 687–796 (KPTV…VAAG). S745 is subject to Phosphoserine. One can recognise a MyTH4 domain in the interval 832-986 (YSKDGLYASL…PSRMEVVSIL (155 aa)). The FERM domain maps to 997–1333 (FSIPVHFTNG…NHCTTTVNPP (337 aa)).

This Homo sapiens (Human) protein is Pleckstrin homology domain-containing family H member 1 (PLEKHH1).